A 195-amino-acid polypeptide reads, in one-letter code: Phenoloxidase subunit 1 (195 aa).

His-10 provides a ligand contact to Cu cation. N-linked (GlcNAc...) asparagine glycans are attached at residues Asn-77, Asn-97, and Asn-98.

The protein belongs to the tyrosinase family. As to quaternary structure, heterodimer. It depends on Cu(2+) as a cofactor.

The protein localises to the secreted. It carries out the reaction 2 L-dopa + O2 = 2 L-dopaquinone + 2 H2O. The enzyme catalyses L-tyrosine + O2 = L-dopaquinone + H2O. Functionally, this is a copper-containing oxidase that functions in the formation of pigments such as melanins and other polyphenolic compounds. Catalyzes the rate-limiting conversions of tyrosine to DOPA, DOPA to DOPA-quinone and possibly 5,6 dihydroxyindole to indole-5'6 quinone. This is Phenoloxidase subunit 1 from Simulium damnosum (Black fly).